Consider the following 878-residue polypeptide: Alanine--tRNA ligase (878 aa).

Zn(2+) contacts are provided by His-567, His-571, Cys-669, and His-673.

The protein belongs to the class-II aminoacyl-tRNA synthetase family. The cofactor is Zn(2+).

It is found in the cytoplasm. The catalysed reaction is tRNA(Ala) + L-alanine + ATP = L-alanyl-tRNA(Ala) + AMP + diphosphate. Functionally, catalyzes the attachment of alanine to tRNA(Ala) in a two-step reaction: alanine is first activated by ATP to form Ala-AMP and then transferred to the acceptor end of tRNA(Ala). Also edits incorrectly charged Ser-tRNA(Ala) and Gly-tRNA(Ala) via its editing domain. The chain is Alanine--tRNA ligase from Rickettsia massiliae (strain Mtu5).